The primary structure comprises 605 residues: F-box/WD repeat-containing protein pof1 (605 aa).

One can recognise an F-box domain in the interval 107 to 153 (LDFLSLLPVEISFRILSFLDARSLCQAAQVSKHWKELADDDVIWHRM). The span at 195-212 (GVDQAHESSPVKKAKLDD) shows a compositional bias: basic and acidic residues. The tract at residues 195-231 (GVDQAHESSPVKKAKLDDYPTSSNEETISSVKPPSPN) is disordered. A compositionally biased stretch (polar residues) spans 214-231 (PTSSNEETISSVKPPSPN). Phosphoserine is present on residues Ser-229 and Ser-232. WD repeat units lie at residues 271-299 (GHSD…RLWN), 311-339 (GHSS…RIWN), 350-379 (HGHT…KLWH), 390-420 (GHTG…KIWS), 432-460 (AHIG…KQWD), 472-500 (GHIE…KVWE), and 510-538 (NHSE…YLWL).

As to quaternary structure, a part of the E3 ubiquitin ligase Skp1-Cullin-1-F-box (SCF) complex. Interacts with cul1, skp1 and phosphorylated zip1.

The protein resides in the nucleus. Its function is as follows. Probably recognizes and binds to some phosphorylated proteins and promotes their ubiquitination and degradation. Required for the inactivation of zip1 via ubiquitination. The chain is F-box/WD repeat-containing protein pof1 (pof1) from Schizosaccharomyces pombe (strain 972 / ATCC 24843) (Fission yeast).